We begin with the raw amino-acid sequence, 189 residues long: Putative ankyrin repeat protein L38 (189 aa).

An ANK repeat occupies 108–137; the sequence is YGKTPLITAIKSGNCIMVKKLIDYGADFNK.

The polypeptide is Putative ankyrin repeat protein L38 (Acanthamoeba polyphaga mimivirus (APMV)).